An 802-amino-acid chain; its full sequence is Fibroblast growth factor receptor 3 (802 aa).

The 89-residue stretch at 27–115 folds into the Ig-like C2-type 1 domain; sequence PDYLMVEQPP…ILRNFTIRVT (89 aa). Residues Cys-52 and Cys-98 are joined by a disulfide bond. N-linked (GlcNAc...) asparagine glycosylation is found at Asn-74, Asn-87, and Asn-109. The tract at residues 116 to 148 is disordered; the sequence is DLPSSGDDEDDDDDDDDETEDREPPRWTQPERM. The segment covering 121–136 has biased composition (acidic residues); the sequence is GDDEDDDDDDDDETED. The segment covering 137–148 has biased composition (basic and acidic residues); that stretch reads REPPRWTQPERM. Ig-like C2-type domains are found at residues 140–233 and 242–342; these read PRWT…YQLD and PILQ…FWLH. Cys-165 and Cys-217 are joined by a disulfide. Asn-214, Asn-251, Asn-283, Asn-303, and Asn-315 each carry an N-linked (GlcNAc...) asparagine glycan. Cys-264 and Cys-326 are oxidised to a cystine. A helical transmembrane segment spans residues 363–383; that stretch reads ITVLIVVTSTIVFILLVIIVI. At 384–802 the chain is on the cytoplasmic side; the sequence is THLMKVPSKK…HQQHNGAIPT (419 aa). Residues 462 to 751 form the Protein kinase domain; that stretch reads LTLGKPLGEG…LTVTSTNEYL (290 aa). ATP contacts are provided by residues 468–476 and Lys-498; that span reads LGEGCFGQV. The Proton acceptor role is filled by Asp-607. Tyr-637, Tyr-638, Tyr-714, and Tyr-750 each carry phosphotyrosine; by autocatalysis.

Belongs to the protein kinase superfamily. Tyr protein kinase family. Fibroblast growth factor receptor subfamily. In terms of assembly, monomer. Homodimer after ligand binding. Autophosphorylated. Binding of FGF family members together with heparan sulfate proteoglycan or heparin promotes receptor dimerization and autophosphorylation on tyrosine residues. Autophosphorylation occurs in trans between the two FGFR molecules present in the dimer.

The protein resides in the cell membrane. It carries out the reaction L-tyrosyl-[protein] + ATP = O-phospho-L-tyrosyl-[protein] + ADP + H(+). Its activity is regulated as follows. Present in an inactive conformation in the absence of bound ligand. Ligand binding leads to dimerization and activation by autophosphorylation on tyrosine residues. Functionally, tyrosine-protein kinase that acts as a cell-surface receptor for fibroblast growth factors and plays an essential role in the regulation of cell proliferation, differentiation and apoptosis. Plays an essential role in the regulation of chondrocyte differentiation, proliferation and apoptosis, and is required for normal skeleton development. Regulates both osteogenesis and postnatal bone mineralization by osteoblasts. Promotes apoptosis in chondrocytes, but can also promote cancer cell proliferation. Phosphorylates PLCG1, CBL and FRS2. Ligand binding leads to the activation of several signaling cascades. Activation of PLCG1 leads to the production of the cellular signaling molecules diacylglycerol and inositol 1,4,5-trisphosphate. Phosphorylation of FRS2 triggers recruitment of GRB2, GAB1, PIK3R1 and SOS1, and mediates activation of RAS, MAPK1/ERK2, MAPK3/ERK1 and the MAP kinase signaling pathway, as well as of the AKT1 signaling pathway. The protein is Fibroblast growth factor receptor 3 (fgfr3) of Xenopus laevis (African clawed frog).